Consider the following 1475-residue polypeptide: Alpha-glucan water dikinase, chloroplastic (1475 aa).

Residues 1–85 (MSNSIGRNVL…HRPVLITPRA (85 aa)) constitute a chloroplast transit peptide. Catalysis depends on His-1077, which acts as the Tele-phosphohistidine intermediate.

Belongs to the PEP-utilizing enzyme family. Homodimer. The cofactor is Mg(2+).

It localises to the plastid. The protein localises to the chloroplast. The enzyme catalyses [(1-&gt;4)-alpha-D-glucosyl](n) + n ATP + n H2O = [(1-&gt;4)-6-phospho-alpha-D-glucosyl](n) + n AMP + n phosphate + 2n H(+). Functionally, mediates the incorporation of phosphate into starch-like alpha-glucan, mostly at the C-6 position of glucose units. Acts as an overall regulator of starch mobilization. Required for starch degradation, suggesting that the phosphate content of starch regulates its degradability. The protein is Alpha-glucan water dikinase, chloroplastic (R1) of Citrus reticulata (Tangerine).